The following is a 207-amino-acid chain: Twist-related protein 1 (207 aa).

Over residues 1–18 (MMQDVSSSPVSPADDSLS) the composition is skewed to low complexity. The segment at 1-110 (MMQDVSSSPV…GGGSPQSYEE (110 aa)) is disordered. Residues 34 to 43 (RGGRKRRSSR) are compositionally biased toward basic residues. 2 stretches are compositionally biased toward gly residues: residues 46-65 (AGGGAGPGGAAGGGVGGGDE) and 80-104 (GCGGGGSAGGGGGGGGGGSSSGGGS). Positions 113 to 164 (TQRVMANVRERQRTQSLNEAFAALRKIIPTLPSDKLSKIQTLKLAARYIDFL) constitute a bHLH domain. The tract at residues 166 to 196 (QVLQSDELDSKMASCSYVAHERLSYAFSVWR) is sufficient for transactivation activity.

In terms of assembly, efficient DNA binding requires dimerization with another bHLH protein. Homodimer or heterodimer with E proteins such as TCF3. ID1 binds preferentially to TCF3 but does not interact efficiently with TWIST1 so ID1 levels control the amount of TCF3 available to dimerize with TWIST and thus determine the type of dimer formed.

Its subcellular location is the nucleus. Acts as a transcriptional regulator. Inhibits myogenesis by sequestrating E proteins, inhibiting trans-activation by MEF2, and inhibiting DNA-binding by MYOD1 through physical interaction. This interaction probably involves the basic domains of both proteins. Also represses expression of pro-inflammatory cytokines such as TNFA and IL1B. Regulates cranial suture patterning and fusion. Activates transcription as a heterodimer with E proteins. Regulates gene expression differentially, depending on dimer composition. Homodimers induce expression of FGFR2 and POSTN while heterodimers repress FGFR2 and POSTN expression and induce THBS1 expression. Heterodimerization is also required for osteoblast differentiation. Represses the activity of the circadian transcriptional activator: NPAS2-BMAL1 heterodimer. The protein is Twist-related protein 1 (TWIST1) of Cebus capucinus (White-faced sapajou).